We begin with the raw amino-acid sequence, 336 residues long: Phospho-N-acetylmuramoyl-pentapeptide-transferase (336 aa).

The next 10 membrane-spanning stretches (helical) occupy residues 3 to 23 (LTLIAAIISFMVSAFTMPYFI), 53 to 73 (GGTVFLLVATAVSLLVSLFSI), 78 to 98 (SLALISGILSIVVIYGIIGFL), 118 to 138 (LALQLAGGLMFYFLHVSPSGI), 143 to 163 (VFGYQLSLGIFYLFFVLFWVV), 174 to 194 (GIDGLASISVVISLVTYGVIA), 200 to 220 (FDVLLLIGTMIGALLGFFLFN), 226 to 246 (VFMGDVGSLALGAMLAAISIA), 251 to 271 (WTLLIIGIVYVLETSSVMLQV), and 316 to 336 (AFLWGVGSLASLLVLAILYVF).

This sequence belongs to the glycosyltransferase 4 family. MraY subfamily. The cofactor is Mg(2+).

It localises to the cell membrane. The catalysed reaction is UDP-N-acetyl-alpha-D-muramoyl-L-alanyl-gamma-D-glutamyl-L-lysyl-D-alanyl-D-alanine + di-trans,octa-cis-undecaprenyl phosphate = Mur2Ac(oyl-L-Ala-gamma-D-Glu-L-Lys-D-Ala-D-Ala)-di-trans,octa-cis-undecaprenyl diphosphate + UMP. It functions in the pathway cell wall biogenesis; peptidoglycan biosynthesis. Functionally, catalyzes the initial step of the lipid cycle reactions in the biosynthesis of the cell wall peptidoglycan: transfers peptidoglycan precursor phospho-MurNAc-pentapeptide from UDP-MurNAc-pentapeptide onto the lipid carrier undecaprenyl phosphate, yielding undecaprenyl-pyrophosphoryl-MurNAc-pentapeptide, known as lipid I. This chain is Phospho-N-acetylmuramoyl-pentapeptide-transferase, found in Streptococcus pyogenes serotype M6 (strain ATCC BAA-946 / MGAS10394).